The following is a 61-amino-acid chain: Small ribosomal subunit protein uS14 (61 aa).

Residues Cys-24, Cys-27, Cys-40, and Cys-43 each coordinate Zn(2+).

It belongs to the universal ribosomal protein uS14 family. Zinc-binding uS14 subfamily. Part of the 30S ribosomal subunit. Contacts proteins S3 and S10. Zn(2+) serves as cofactor.

In terms of biological role, binds 16S rRNA, required for the assembly of 30S particles and may also be responsible for determining the conformation of the 16S rRNA at the A site. In Carboxydothermus hydrogenoformans (strain ATCC BAA-161 / DSM 6008 / Z-2901), this protein is Small ribosomal subunit protein uS14.